The primary structure comprises 563 residues: 4-hydroxy-7-methoxy-3-oxo-3,4-dihydro-2H-1,4-benzoxazin-2-yl glucoside beta-D-glucosidase 2, chloroplastic (563 aa).

A chloroplast-targeting transit peptide spans 1–51; that stretch reads MAPLLAAAMNHAAHPVLRSHLGPNNESFSRHHLSSSPQSSKRRFNLSFTPR. A disordered region spans residues 17–43; it reads LRSHLGPNNESFSRHHLSSSPQSSKRR. A beta-D-glucoside contacts are provided by residues Gln89, His193, and 241 to 242; that span reads NE. The active-site Proton donor is the Glu242. The cysteines at positions 261 and 267 are disulfide-linked. Residues 322-358 form a dimerization region; that stretch reads SFLDEQAKERSMDINLGWFLEPVVRGDYPFSMRSLAR. An a beta-D-glucoside-binding site is contributed by Tyr384. Dimerization regions lie at residues 391–402 and 447–450; these read HIDISPKYSPVL and KYGN. A beta-D-glucoside is bound by residues Glu457, Trp508, 515 to 516, and Tyr524; that span reads EW. Residue Glu457 is the Nucleophile of the active site.

Belongs to the glycosyl hydrolase 1 family. In terms of assembly, homo- and heterodimer. In terms of tissue distribution, expressed in leaves only starting at day 6 after germination.

The protein localises to the plastid. The protein resides in the chloroplast. It catalyses the reaction Hydrolysis of terminal, non-reducing beta-D-glucosyl residues with release of beta-D-glucose.. It carries out the reaction DIMBOA beta-D-glucoside + H2O = DIMBOA + D-glucose. The catalysed reaction is DIBOA beta-D-glucoside + H2O = DIBOA + D-glucose. In terms of biological role, beta-glucosidase acting poorly on artificial aryl beta-glucosides. Has no activity toward the chromogenic substrate 6-bromo-2-naphthyl-beta-D-glucoside (6BNGlc). The chain is 4-hydroxy-7-methoxy-3-oxo-3,4-dihydro-2H-1,4-benzoxazin-2-yl glucoside beta-D-glucosidase 2, chloroplastic (GLU2) from Zea mays (Maize).